The primary structure comprises 44 residues: Large ribosomal subunit protein bL34 (44 aa).

The protein belongs to the bacterial ribosomal protein bL34 family.

This Variovorax paradoxus (strain S110) protein is Large ribosomal subunit protein bL34.